Consider the following 396-residue polypeptide: Elongation factor Tu (396 aa).

A tr-type G domain is found at 10–206 (KPHVNVGTIG…ALDSYIPTPE (197 aa)). The tract at residues 19–26 (GHVDHGKT) is G1. A GTP-binding site is contributed by 19 to 26 (GHVDHGKT). Thr-26 is a Mg(2+) binding site. The interval 60 to 64 (GITIN) is G2. Positions 81–84 (DCPG) are G3. GTP is bound by residues 81 to 85 (DCPGH) and 136 to 139 (NKCD). The G4 stretch occupies residues 136-139 (NKCD). Residues 174 to 176 (SAL) are G5.

The protein belongs to the TRAFAC class translation factor GTPase superfamily. Classic translation factor GTPase family. EF-Tu/EF-1A subfamily. In terms of assembly, monomer.

Its subcellular location is the cytoplasm. It carries out the reaction GTP + H2O = GDP + phosphate + H(+). Its function is as follows. GTP hydrolase that promotes the GTP-dependent binding of aminoacyl-tRNA to the A-site of ribosomes during protein biosynthesis. The sequence is that of Elongation factor Tu from Aromatoleum aromaticum (strain DSM 19018 / LMG 30748 / EbN1) (Azoarcus sp. (strain EbN1)).